The following is a 172-amino-acid chain: C-phycocyanin beta chain (172 aa).

(2R,3E)-phycocyanobilin-binding positions include Asn35, Asp39, Asn72, Arg77, Cys82, 82–88, 149–151, and Cys153; these read CLRDMEI and TIG. Position 72 is an N4-methylasparagine (Asn72).

The protein belongs to the phycobiliprotein family. In terms of assembly, heterodimer of an alpha and a beta subunit, which further assembles into trimers and the trimers into hexamers. The basic functional unit of phycobiliproteins is a ring-shaped hexamer formed from two back-to-back trimers contacting via the alpha chain subunits. The trimers are composed of alpha/beta subunit heterodimers arranged around a three-fold axis of symmetry. The phycoerythrins also contain a gamma subunit which is located in the center of the hexamer. Contains two covalently linked phycocyanobilin chromophores.

It localises to the plastid. It is found in the chloroplast thylakoid membrane. Functionally, light-harvesting photosynthetic tetrapyrrole chromophore-protein from the phycobiliprotein complex (phycobilisome, PBS). Phycocyanin is the major phycobiliprotein in the PBS rod. The polypeptide is C-phycocyanin beta chain (cpcB) (Cyanidium caldarium (Red alga)).